The chain runs to 628 residues: DNA ligase (628 aa).

NAD(+) contacts are provided by residues 36–40 (DVEYD), 85–86 (SL), and Glu-117. Lys-119 (N6-AMP-lysine intermediate) is an active-site residue. Arg-140, Glu-174, Lys-309, and Lys-333 together coordinate NAD(+). 4 residues coordinate Zn(2+): Cys-427, Cys-430, Cys-446, and Cys-452.

The protein belongs to the NAD-dependent DNA ligase family. LigA subfamily. Mg(2+) serves as cofactor. Mn(2+) is required as a cofactor.

The enzyme catalyses NAD(+) + (deoxyribonucleotide)n-3'-hydroxyl + 5'-phospho-(deoxyribonucleotide)m = (deoxyribonucleotide)n+m + AMP + beta-nicotinamide D-nucleotide.. DNA ligase that catalyzes the formation of phosphodiester linkages between 5'-phosphoryl and 3'-hydroxyl groups in double-stranded DNA using NAD as a coenzyme and as the energy source for the reaction. It is essential for DNA replication and repair of damaged DNA. The sequence is that of DNA ligase from Tropheryma whipplei (strain Twist) (Whipple's bacillus).